A 424-amino-acid polypeptide reads, in one-letter code: Histidine--tRNA ligase (424 aa).

Belongs to the class-II aminoacyl-tRNA synthetase family. As to quaternary structure, homodimer.

The protein resides in the cytoplasm. It carries out the reaction tRNA(His) + L-histidine + ATP = L-histidyl-tRNA(His) + AMP + diphosphate + H(+). The sequence is that of Histidine--tRNA ligase from Shewanella woodyi (strain ATCC 51908 / MS32).